Here is a 213-residue protein sequence, read N- to C-terminus: Probable septum site-determining protein MinC (213 aa).

It belongs to the MinC family. As to quaternary structure, interacts with MinD and FtsZ.

Its function is as follows. Cell division inhibitor that blocks the formation of polar Z ring septums. Rapidly oscillates between the poles of the cell to destabilize FtsZ filaments that have formed before they mature into polar Z rings. Prevents FtsZ polymerization. In Pseudothermotoga lettingae (strain ATCC BAA-301 / DSM 14385 / NBRC 107922 / TMO) (Thermotoga lettingae), this protein is Probable septum site-determining protein MinC.